Consider the following 119-residue polypeptide: Beta-2-microglobulin (119 aa).

The N-terminal stretch at 1-20 (MACSVVVALLALLSLSGLEA) is a signal peptide. Residues 25–114 (PKIQVYSRHP…VTFSTPKTVK (90 aa)) enclose the Ig-like C1-type domain. The cysteines at positions 45 and 100 are disulfide-linked.

Belongs to the beta-2-microglobulin family. As to quaternary structure, heterodimer of an alpha chain and a beta chain. Beta-2-microglobulin is the beta-chain of major histocompatibility complex class I molecules.

It is found in the secreted. Functionally, component of the class I major histocompatibility complex (MHC). Involved in the presentation of peptide antigens to the immune system. The protein is Beta-2-microglobulin (B2M) of Mico emiliae (Emilia's marmoset).